Reading from the N-terminus, the 55-residue chain is Large ribosomal subunit protein bL33 (55 aa).

Belongs to the bacterial ribosomal protein bL33 family.

The protein is Large ribosomal subunit protein bL33 (rpmG) of Buchnera aphidicola subsp. Acyrthosiphon pisum (strain APS) (Acyrthosiphon pisum symbiotic bacterium).